The chain runs to 483 residues: MSLEDSLRSLSLDYLNLLINGQAFSDVVFSVEGRLVHAHRCILAARSLFFRKFFCGPDPPSGLDPSGNRVNSSTRSGVIPVNSVGYEVFLLMLQFLYSGQVSIVPQKHEPRPNCGDRGCWHTHCTSAVDLALDTLSAARYFGVEQLALLTQKQLASMVEKASIEDVMKVLLASRKQDMHQLWTTCSHLVAKSGLPPEVLAKHLPIDIIAKIEELRMKSSLSRRSLIPHHHHNPHHHHDHLTAAADLEDQKIRRMRRALDSSDVELVKLMVMGEGLNLDEALALPYAVESCSREVVKALLELGAADVNFPAGPTGKTPLHIAAEMVSPDMVAVLLDHHADPNVRTVDGVTPLDILRTLTSDFLFKGAVPGLTHIEPNKLRLCLELVQSAALVMSREEGNNNNNANNNNTGSSATNMYPHNHMNEEHHSHHNNNSNMDSRLVYLNLGANTQMSTSRLDSGDDDHNSNQREAMNPSMYHHHHSHDY.

In terms of domain architecture, BTB spans 25-105 (SDVVFSVEGR…LYSGQVSIVP (81 aa)). A C2HC NPR-type zinc finger spans residues 111-125 (RPNCGDRGCWHTHCT). C114, C119, H121, and C124 together coordinate Zn(2+). ANK repeat units follow at residues 249 to 278 (QKIRRMRRALDSSDVELVKLMVMGEGLNLD), 279 to 308 (EALALPYAVESCSREVVKALLELGAADVNF), 313 to 342 (TGKTPLHIAAEMVSPDMVAVLLDHHADPNV), and 346 to 380 (DGVTPLDILRTLTSDFLFKGAVPGLTHIEPNKLRL). 2 disordered regions span residues 395–435 (EEGN…NSNM) and 450–483 (MSTSRLDSGDDDHNSNQREAMNPSMYHHHHSHDY). Over residues 398-414 (NNNNNANNNNTGSSATN) the composition is skewed to low complexity. Residues 456–465 (DSGDDDHNSN) show a composition bias toward basic and acidic residues.

The protein belongs to the plant 'ANKYRIN-BTB/POZ' family. 'NOOT-BOP-COCH-like' (NBCL) subfamily. Homodimer.

It localises to the nucleus. The protein resides in the cytoplasm. The protein localises to the cell membrane. The protein operates within protein modification; protein ubiquitination. Its function is as follows. May act as a substrate-specific adapter of an E3 ubiquitin-protein ligase complex (CUL3-RBX1-BTB) which mediates the ubiquitination and subsequent proteasomal degradation of target proteins. Transcriptional co-regulator involved in the promotion of leaf and floral meristem fate and determinacy. Promotes normal stipule growth and development. Required for the abscission of senescent organs, probably by regulating the cell wall disorganization in abscission zones (AZs, e.g. pulvini at the base of leaves). Down-regulates UNI expression in primordia of leaves and secondary inflorescences, and thereby controls their sizes and/or structures. Involved in the coordination of the symbiotic nodule developmental program. Promotes the formation of root nodules by interacting directly with APP1 to modulate the expression of the nuclear transcription factor Y subunit (NF-YA1), a key nodulin. Necessary for the robust maintenance of nodule identity throughout the nodule developmental program. The protein is BTB/POZ domain and ankyrin repeat-containing protein COCH of Pisum sativum (Garden pea).